Consider the following 467-residue polypeptide: Light-independent protochlorophyllide reductase subunit N (467 aa).

Residues Cys22, Cys47, and Cys107 each contribute to the [4Fe-4S] cluster site.

This sequence belongs to the BchN/ChlN family. As to quaternary structure, protochlorophyllide reductase is composed of three subunits; ChlL, ChlN and ChlB. Forms a heterotetramer of two ChlB and two ChlN subunits. [4Fe-4S] cluster is required as a cofactor.

Its subcellular location is the plastid. The protein resides in the chloroplast. The enzyme catalyses chlorophyllide a + oxidized 2[4Fe-4S]-[ferredoxin] + 2 ADP + 2 phosphate = protochlorophyllide a + reduced 2[4Fe-4S]-[ferredoxin] + 2 ATP + 2 H2O. The protein operates within porphyrin-containing compound metabolism; chlorophyll biosynthesis (light-independent). In terms of biological role, component of the dark-operative protochlorophyllide reductase (DPOR) that uses Mg-ATP and reduced ferredoxin to reduce ring D of protochlorophyllide (Pchlide) to form chlorophyllide a (Chlide). This reaction is light-independent. The NB-protein (ChlN-ChlB) is the catalytic component of the complex. The protein is Light-independent protochlorophyllide reductase subunit N of Pinus thunbergii (Japanese black pine).